Here is an 801-residue protein sequence, read N- to C-terminus: Probable inorganic carbon transporter subunit DabA (801 aa).

Zn(2+) is bound by residues Cys298, Asp300, His481, and Cys496. The interval 575–596 (RENAAAERAESMGSDASSGVSE) is disordered.

It belongs to the inorganic carbon transporter (TC 9.A.2) DabA family. Forms a complex with DabB. Requires Zn(2+) as cofactor.

Its subcellular location is the cell membrane. In terms of biological role, part of an energy-coupled inorganic carbon pump. This is Probable inorganic carbon transporter subunit DabA from Haloarcula marismortui (strain ATCC 43049 / DSM 3752 / JCM 8966 / VKM B-1809) (Halobacterium marismortui).